The primary structure comprises 256 residues: Isoprenyl transferase (256 aa).

Residue D33 is part of the active site. Residue D33 participates in Mg(2+) binding. Residues 34-37 (GNGR), W38, R46, H50, and 78-80 (STE) each bind substrate. The active-site Proton acceptor is N81. Residues W82, R84, R201, and 207-209 (RIS) contribute to the substrate site. E220 contributes to the Mg(2+) binding site.

Belongs to the UPP synthase family. In terms of assembly, homodimer. Mg(2+) serves as cofactor.

Functionally, catalyzes the condensation of isopentenyl diphosphate (IPP) with allylic pyrophosphates generating different type of terpenoids. The polypeptide is Isoprenyl transferase (Staphylococcus aureus (strain COL)).